The chain runs to 405 residues: Eukaryotic initiation factor 4A (405 aa).

The Q motif motif lies at 32-60 (PTFESMGLREELLRGIFNYGFEKPSAIQQ). A Helicase ATP-binding domain is found at 63–233 (ILPIIKGRDT…EKFMTKPVRI (171 aa)). 76–83 (AQSGTGKT) serves as a coordination point for ATP. The DEAD box motif lies at 181 to 184 (DEAD). The Helicase C-terminal domain maps to 244–405 (GIKQFFVSVE…EMPVNFASII (162 aa)).

Belongs to the DEAD box helicase family. eIF4A subfamily.

The protein resides in the cytoplasm. The enzyme catalyses ATP + H2O = ADP + phosphate + H(+). In terms of biological role, ATP-dependent RNA helicase which is a subunit of the eIF4F complex involved in cap recognition and is required for mRNA binding to ribosome. In the current model of translation initiation, eIF4A unwinds RNA secondary structures in the 5'-UTR of mRNAs which is necessary to allow efficient binding of the small ribosomal subunit, and subsequent scanning for the initiator codon. This Dictyostelium discoideum (Social amoeba) protein is Eukaryotic initiation factor 4A (tifA).